Reading from the N-terminus, the 500-residue chain is Glycerol kinase (500 aa).

Thr-11 lines the ADP pocket. ATP-binding residues include Thr-11, Thr-12, and Ser-13. Thr-11 lines the sn-glycerol 3-phosphate pocket. Residue Arg-15 participates in ADP binding. Residues Arg-81, Glu-82, Tyr-133, and Asp-242 each coordinate sn-glycerol 3-phosphate. Residues Arg-81, Glu-82, Tyr-133, Asp-242, and Gln-243 each coordinate glycerol. ADP-binding residues include Thr-264 and Gly-307. The ATP site is built by Thr-264, Gly-307, Gln-311, and Gly-411. Gly-411 contributes to the ADP binding site.

This sequence belongs to the FGGY kinase family.

The catalysed reaction is glycerol + ATP = sn-glycerol 3-phosphate + ADP + H(+). It participates in polyol metabolism; glycerol degradation via glycerol kinase pathway; sn-glycerol 3-phosphate from glycerol: step 1/1. With respect to regulation, inhibited by fructose 1,6-bisphosphate (FBP). Its function is as follows. Key enzyme in the regulation of glycerol uptake and metabolism. Catalyzes the phosphorylation of glycerol to yield sn-glycerol 3-phosphate. The polypeptide is Glycerol kinase (Rhodopseudomonas palustris (strain ATCC BAA-98 / CGA009)).